Consider the following 261-residue polypeptide: Cytochrome c oxidase subunit 3 (261 aa).

Residues 1–15 (MAHQAHSYHMVDPSP) lie on the Mitochondrial matrix side of the membrane. Residues 16–34 (WPIFGATAALLTTSGLIMW) form a helical membrane-spanning segment. Topologically, residues 35–40 (FHYNSL) are mitochondrial intermembrane. The helical transmembrane segment at 41–66 (YLLTLGLLSMFLVMIQWWRDIVREST) threads the bilayer. Residues 67-72 (FQGHHT) are Mitochondrial matrix-facing. The helical transmembrane segment at 73–105 (PTVQKGLRYGMILFITSEAFFFLGFFWAFFHSS) threads the bilayer. Over 106 to 128 (LAPTPELGAQWPPTGINPLNPLE) the chain is Mitochondrial intermembrane. A helical transmembrane segment spans residues 129–152 (VPLLNTAILLASGVTVTWAHHSIT). The Mitochondrial matrix segment spans residues 153–155 (ESN). The chain crosses the membrane as a helical span at residues 156–183 (RKQAIHALSLTIILGFYFTALQAMEYHE). At 184 to 190 (ASFSIAD) the chain is on the mitochondrial intermembrane side. A helical membrane pass occupies residues 191-223 (GVYGSTFFVATGFHGLHVIIGSSFLTVCLLRLI). Residues 224 to 232 (KFHFTTNHH) are Mitochondrial matrix-facing. A helical membrane pass occupies residues 233 to 256 (FGFEAAAWYWHFVDVIWLFLYMSI). At 257–261 (YWWGS) the chain is on the mitochondrial intermembrane side.

The protein belongs to the cytochrome c oxidase subunit 3 family. Component of the cytochrome c oxidase (complex IV, CIV), a multisubunit enzyme composed of 14 subunits. The complex is composed of a catalytic core of 3 subunits MT-CO1, MT-CO2 and MT-CO3, encoded in the mitochondrial DNA, and 11 supernumerary subunits COX4I, COX5A, COX5B, COX6A, COX6B, COX6C, COX7A, COX7B, COX7C, COX8 and NDUFA4, which are encoded in the nuclear genome. The complex exists as a monomer or a dimer and forms supercomplexes (SCs) in the inner mitochondrial membrane with NADH-ubiquinone oxidoreductase (complex I, CI) and ubiquinol-cytochrome c oxidoreductase (cytochrome b-c1 complex, complex III, CIII), resulting in different assemblies (supercomplex SCI(1)III(2)IV(1) and megacomplex MCI(2)III(2)IV(2)).

Its subcellular location is the mitochondrion inner membrane. It carries out the reaction 4 Fe(II)-[cytochrome c] + O2 + 8 H(+)(in) = 4 Fe(III)-[cytochrome c] + 2 H2O + 4 H(+)(out). Component of the cytochrome c oxidase, the last enzyme in the mitochondrial electron transport chain which drives oxidative phosphorylation. The respiratory chain contains 3 multisubunit complexes succinate dehydrogenase (complex II, CII), ubiquinol-cytochrome c oxidoreductase (cytochrome b-c1 complex, complex III, CIII) and cytochrome c oxidase (complex IV, CIV), that cooperate to transfer electrons derived from NADH and succinate to molecular oxygen, creating an electrochemical gradient over the inner membrane that drives transmembrane transport and the ATP synthase. Cytochrome c oxidase is the component of the respiratory chain that catalyzes the reduction of oxygen to water. Electrons originating from reduced cytochrome c in the intermembrane space (IMS) are transferred via the dinuclear copper A center (CU(A)) of subunit 2 and heme A of subunit 1 to the active site in subunit 1, a binuclear center (BNC) formed by heme A3 and copper B (CU(B)). The BNC reduces molecular oxygen to 2 water molecules using 4 electrons from cytochrome c in the IMS and 4 protons from the mitochondrial matrix. The protein is Cytochrome c oxidase subunit 3 (MT-CO3) of Struthio camelus (Common ostrich).